A 794-amino-acid polypeptide reads, in one-letter code: uncharacterized protein (794 aa).

A signal peptide spans 1 to 22 (MKFKYGAIVFSGLLGVSAILAA). Cysteine 23 carries N-palmitoyl cysteine lipidation. Cysteine 23 carries S-diacylglycerol cysteine lipidation. Composition is skewed to polar residues over residues 182 to 200 (TSVQ…NNGV) and 245 to 261 (QMST…DANQ). Disordered regions lie at residues 182-208 (TSVQ…KIDK), 222-261 (NKAK…DANQ), 474-529 (FKIK…GKNG), 566-594 (SAAK…TEQK), and 737-757 (KNEK…RGKQ). Over residues 475–501 (KIKSSNKSKSSSSKSSTKAETGKTSGG) the composition is skewed to low complexity. A compositionally biased stretch (polar residues) spans 511–526 (GAQNQGKKGEGAQNQG). The span at 567 to 576 (AAKKEDKKSG) shows a compositional bias: basic and acidic residues. Polar residues predominate over residues 577–593 (ESTTEQTQIQSKSVTEQ). Positions 737–751 (KNEKKEGSDQKDSKS) are enriched in basic and acidic residues.

This sequence belongs to the MG185/MG260 family.

Its subcellular location is the cell membrane. This is an uncharacterized protein from Mycoplasma pneumoniae (strain ATCC 29342 / M129 / Subtype 1) (Mycoplasmoides pneumoniae).